Consider the following 145-residue polypeptide: Protein BUD31 homolog 2 (145 aa).

The protein belongs to the BUD31 (G10) family.

Its subcellular location is the nucleus. The polypeptide is Protein BUD31 homolog 2 (Oryza sativa subsp. japonica (Rice)).